A 654-amino-acid polypeptide reads, in one-letter code: Probable Xaa-Pro aminopeptidase P (654 aa).

Mn(2+)-binding residues include D449, D460, E558, and E572.

It belongs to the peptidase M24B family. It depends on Mn(2+) as a cofactor.

The catalysed reaction is Release of any N-terminal amino acid, including proline, that is linked to proline, even from a dipeptide or tripeptide.. Functionally, catalyzes the removal of a penultimate prolyl residue from the N-termini of peptides. The protein is Probable Xaa-Pro aminopeptidase P (ampp) of Aspergillus flavus (strain ATCC 200026 / FGSC A1120 / IAM 13836 / NRRL 3357 / JCM 12722 / SRRC 167).